Here is a 206-residue protein sequence, read N- to C-terminus: Small ribosomal subunit protein eS1 (206 aa).

Belongs to the eukaryotic ribosomal protein eS1 family.

The protein is Small ribosomal subunit protein eS1 of Methanocorpusculum labreanum (strain ATCC 43576 / DSM 4855 / Z).